A 497-amino-acid chain; its full sequence is MASGILLNVKEEVTCPICLELLTEPLSLHCGHSFCQACITANHKKSMLYKEGERSCPVCRISYQPENIQPNRHVANIVEKLREVKLSPEEGQKVDHCARHGEKLLLFCQEDSKVICWLCERSQEHRGHHTFLMEEVAQEYHVKLQTALEMLRQKQQEAEKLEADIREEKASWKIQIDYDKTNVSADFEQLREILDWEESNELQNLEKEEEDILKSLTKSETEMVQQTQYMRELISELEHRLQGSMMDLLQGVDGIIKRIENMTLKKPKTFHKNQRRVFRAPDLKGMLDMFRELTDARRYWVDVTLAPNNISHAVIAEDKRQVSSRNPQIMYQAPGTLFTFPSLTNFNYCTGVLGSQSITSGKHYWEVDVSKKSAWILGVCAGFQSDAMYNIEQNENYQPKYGYWVIGLQEGVKYSVFQDGSSHTPFAPFIVPLSVIICPDRVGVFVDYEACTVSFFNITNHGFLIYKFSQCSFSKPVFPYLNPRKCTVPMTLCSPSS.

Ala2 bears the N-acetylalanine mark. The RING-type zinc-finger motif lies at 15–60 (CPICLELLTEPLSLHCGHSFCQACITANHKKSMLYKEGERSCPVCR). Residue Ser87 is modified to Phosphoserine. The B box-type zinc-finger motif lies at 92-133 (QKVDHCARHGEKLLLFCQEDSKVICWLCERSQEHRGHHTFLM). 4 residues coordinate Zn(2+): Cys97, His100, Cys119, and His125. The stretch at 137 to 225 (AQEYHVKLQT…LTKSETEMVQ (89 aa)) forms a coiled coil. The tract at residues 187–200 (FEQLREILDWEESN) is required for interaction with GABARAP and for autophagy. The 215-residue stretch at 283 to 497 (LKGMLDMFRE…VPMTLCSPSS (215 aa)) folds into the B30.2/SPRY domain.

The protein belongs to the TRIM/RBCC family. In terms of assembly, can form homodimers and homotrimers. In addition to lower-order dimerization, also exhibits a higher-order multimerization and both low- and high-order multimerizations are essential for its restriction activity. Interacts with MAP3K7/TAK1, TAB2 and TAB3. Interacts with HSPA8/HSC70, PSMC2, PSMC4, PSMC5 and PSMD7. Interacts with SQSTM1. Interacts (via B30.2/SPRY domain) with HSPA1A/B. Interacts with TRIM6 and TRIM34. Interacts with BECN1; GABARAP. Interacts with ULK1 (phosphorylated form), GABARAPL1, GABARAPL2, MAP1LC3A and MAP1LC3C. Degraded in a proteasome-independent fashion in the absence of viral infection but in a proteasome-dependent fashion following exposure to restriction sensitive virus. In terms of processing, autoubiquitinated in a RING finger- and UBE2D2-dependent manner. Monoubiquitinated by TRIM21. Deubiquitinated by Yersinia YopJ. Ubiquitination may not lead to proteasomal degradation.

It localises to the cytoplasm. The protein localises to the nucleus. It catalyses the reaction S-ubiquitinyl-[E2 ubiquitin-conjugating enzyme]-L-cysteine + [acceptor protein]-L-lysine = [E2 ubiquitin-conjugating enzyme]-L-cysteine + N(6)-ubiquitinyl-[acceptor protein]-L-lysine.. It participates in protein modification; protein ubiquitination. In terms of biological role, capsid-specific restriction factor that prevents infection from non-host-adapted retroviruses. Blocks viral replication early in the life cycle, after viral entry but before reverse transcription. In addition to acting as a capsid-specific restriction factor, also acts as a pattern recognition receptor that activates innate immune signaling in response to the retroviral capsid lattice. Binding to the viral capsid triggers its E3 ubiquitin ligase activity, and in concert with the heterodimeric ubiquitin conjugating enzyme complex UBE2V1-UBE2N (also known as UBC13-UEV1A complex) generates 'Lys-63'-linked polyubiquitin chains, which in turn are catalysts in the autophosphorylation of the MAP3K7/TAK1 complex (includes TAK1, TAB2, and TAB3). Activation of the MAP3K7/TAK1 complex by autophosphorylation results in the induction and expression of NF-kappa-B and MAPK-responsive inflammatory genes, thereby leading to an innate immune response in the infected cell. Restricts infection by human immunodeficiency virus type 1 (HIV-1) and simian immunodeficiency virus (SIV-agm). Plays a role in regulating autophagy through activation of autophagy regulator BECN1 by causing its dissociation from its inhibitors BCL2 and TAB2. Also plays a role in autophagy by acting as a selective autophagy receptor which recognizes and targets HIV-1 capsid protein p24 for autophagic destruction. In Macaca mulatta (Rhesus macaque), this protein is Tripartite motif-containing protein 5 (TRIM5).